The chain runs to 443 residues: Trigger factor (443 aa).

Residues 164–249 (GDVLCVDFVG…AKSLKKAVDP (86 aa)) form the PPIase FKBP-type domain.

It belongs to the FKBP-type PPIase family. Tig subfamily.

It is found in the cytoplasm. It catalyses the reaction [protein]-peptidylproline (omega=180) = [protein]-peptidylproline (omega=0). Functionally, involved in protein export. Acts as a chaperone by maintaining the newly synthesized protein in an open conformation. Functions as a peptidyl-prolyl cis-trans isomerase. The polypeptide is Trigger factor (Gluconobacter oxydans (strain 621H) (Gluconobacter suboxydans)).